We begin with the raw amino-acid sequence, 220 residues long: Large ribosomal subunit protein uL1 (220 aa).

Belongs to the universal ribosomal protein uL1 family. Part of the 50S ribosomal subunit.

In terms of biological role, binds directly to 23S rRNA. The L1 stalk is quite mobile in the ribosome, and is involved in E site tRNA release. Its function is as follows. Protein L1 is also a translational repressor protein, it controls the translation of the L11 operon by binding to its mRNA. In Ehrlichia canis (strain Jake), this protein is Large ribosomal subunit protein uL1.